The following is a 508-amino-acid chain: Photosystem II CP47 reaction center protein (508 aa).

The next 6 helical transmembrane spans lie at 21 to 36, 101 to 115, 140 to 156, 203 to 218, 237 to 252, and 457 to 472; these read SVHI…WAGS, IVFS…IWHW, GIHL…FGAF, IAAG…FHLS, VLSS…AFVV, and SFAL…HGAR.

This sequence belongs to the PsbB/PsbC family. PsbB subfamily. PSII is composed of 1 copy each of membrane proteins PsbA, PsbB, PsbC, PsbD, PsbE, PsbF, PsbH, PsbI, PsbJ, PsbK, PsbL, PsbM, PsbT, PsbX, PsbY, PsbZ, Psb30/Ycf12, at least 3 peripheral proteins of the oxygen-evolving complex and a large number of cofactors. It forms dimeric complexes. Binds multiple chlorophylls. PSII binds additional chlorophylls, carotenoids and specific lipids. is required as a cofactor.

It localises to the plastid. It is found in the chloroplast thylakoid membrane. In terms of biological role, one of the components of the core complex of photosystem II (PSII). It binds chlorophyll and helps catalyze the primary light-induced photochemical processes of PSII. PSII is a light-driven water:plastoquinone oxidoreductase, using light energy to abstract electrons from H(2)O, generating O(2) and a proton gradient subsequently used for ATP formation. The chain is Photosystem II CP47 reaction center protein from Platanus occidentalis (Sycamore).